A 156-amino-acid chain; its full sequence is NAD(P)H-quinone oxidoreductase subunit N (156 aa).

It belongs to the complex I NdhN subunit family. As to quaternary structure, NDH-1 can be composed of about 15 different subunits; different subcomplexes with different compositions have been identified which probably have different functions.

It is found in the cellular thylakoid membrane. The enzyme catalyses a plastoquinone + NADH + (n+1) H(+)(in) = a plastoquinol + NAD(+) + n H(+)(out). The catalysed reaction is a plastoquinone + NADPH + (n+1) H(+)(in) = a plastoquinol + NADP(+) + n H(+)(out). Its function is as follows. NDH-1 shuttles electrons from an unknown electron donor, via FMN and iron-sulfur (Fe-S) centers, to quinones in the respiratory and/or the photosynthetic chain. The immediate electron acceptor for the enzyme in this species is believed to be plastoquinone. Couples the redox reaction to proton translocation, and thus conserves the redox energy in a proton gradient. Cyanobacterial NDH-1 also plays a role in inorganic carbon-concentration. This chain is NAD(P)H-quinone oxidoreductase subunit N, found in Prochlorococcus marinus (strain MIT 9515).